Consider the following 197-residue polypeptide: Peptide deformylase (197 aa).

Residues cysteine 106 and histidine 148 each coordinate Fe cation. Glutamate 149 is an active-site residue. Histidine 152 contacts Fe cation.

The protein belongs to the polypeptide deformylase family. Fe(2+) serves as cofactor.

The catalysed reaction is N-terminal N-formyl-L-methionyl-[peptide] + H2O = N-terminal L-methionyl-[peptide] + formate. Functionally, removes the formyl group from the N-terminal Met of newly synthesized proteins. Requires at least a dipeptide for an efficient rate of reaction. N-terminal L-methionine is a prerequisite for activity but the enzyme has broad specificity at other positions. The protein is Peptide deformylase of Mycolicibacterium vanbaalenii (strain DSM 7251 / JCM 13017 / BCRC 16820 / KCTC 9966 / NRRL B-24157 / PYR-1) (Mycobacterium vanbaalenii).